Reading from the N-terminus, the 637-residue chain is Biosynthetic arginine decarboxylase (637 aa).

The residue at position 101 (K101) is an N6-(pyridoxal phosphate)lysine. Position 286–296 (286–296) interacts with substrate; that stretch reads FDVGGGLAVDY.

This sequence belongs to the Orn/Lys/Arg decarboxylase class-II family. SpeA subfamily. Requires Mg(2+) as cofactor. Pyridoxal 5'-phosphate is required as a cofactor.

It catalyses the reaction L-arginine + H(+) = agmatine + CO2. Its pathway is amine and polyamine biosynthesis; agmatine biosynthesis; agmatine from L-arginine: step 1/1. In terms of biological role, catalyzes the biosynthesis of agmatine from arginine. The chain is Biosynthetic arginine decarboxylase from Shewanella sp. (strain MR-7).